The following is a 360-amino-acid chain: Aminomethyltransferase (360 aa).

The protein belongs to the GcvT family. The glycine cleavage system is composed of four proteins: P, T, L and H.

The enzyme catalyses N(6)-[(R)-S(8)-aminomethyldihydrolipoyl]-L-lysyl-[protein] + (6S)-5,6,7,8-tetrahydrofolate = N(6)-[(R)-dihydrolipoyl]-L-lysyl-[protein] + (6R)-5,10-methylene-5,6,7,8-tetrahydrofolate + NH4(+). The glycine cleavage system catalyzes the degradation of glycine. The polypeptide is Aminomethyltransferase (Pseudoalteromonas translucida (strain TAC 125)).